The following is a 394-amino-acid chain: Chaperone protein DnaJ (394 aa).

The region spanning 5 to 75 (DYYEVLGVDK…EKKQQYDQFG (71 aa)) is the J domain. Residues 150–231 (GVEKTIKYKR…CRGTGTAKET (82 aa)) form a CR-type zinc finger. Cys-163, Cys-166, Cys-179, Cys-182, Cys-205, Cys-208, Cys-219, and Cys-222 together coordinate Zn(2+). CXXCXGXG motif repeat units follow at residues 163-170 (CEHCHGTG), 179-186 (CPTCNGQG), 205-212 (CPDCHGTG), and 219-226 (CKHCRGTG).

It belongs to the DnaJ family. Homodimer. Requires Zn(2+) as cofactor.

It is found in the cytoplasm. In terms of biological role, participates actively in the response to hyperosmotic and heat shock by preventing the aggregation of stress-denatured proteins and by disaggregating proteins, also in an autonomous, DnaK-independent fashion. Unfolded proteins bind initially to DnaJ; upon interaction with the DnaJ-bound protein, DnaK hydrolyzes its bound ATP, resulting in the formation of a stable complex. GrpE releases ADP from DnaK; ATP binding to DnaK triggers the release of the substrate protein, thus completing the reaction cycle. Several rounds of ATP-dependent interactions between DnaJ, DnaK and GrpE are required for fully efficient folding. Also involved, together with DnaK and GrpE, in the DNA replication of plasmids through activation of initiation proteins. This is Chaperone protein DnaJ from Fusobacterium nucleatum subsp. polymorphum (Fusobacterium polymorphum).